The chain runs to 633 residues: Biosynthetic arginine decarboxylase (633 aa).

An N6-(pyridoxal phosphate)lysine modification is found at Lys-101. Residue Val-284 to Tyr-294 coordinates substrate.

It belongs to the Orn/Lys/Arg decarboxylase class-II family. SpeA subfamily. Mg(2+) is required as a cofactor. The cofactor is pyridoxal 5'-phosphate.

The enzyme catalyses L-arginine + H(+) = agmatine + CO2. It participates in amine and polyamine biosynthesis; agmatine biosynthesis; agmatine from L-arginine: step 1/1. Functionally, catalyzes the biosynthesis of agmatine from arginine. This Aeromonas hydrophila subsp. hydrophila (strain ATCC 7966 / DSM 30187 / BCRC 13018 / CCUG 14551 / JCM 1027 / KCTC 2358 / NCIMB 9240 / NCTC 8049) protein is Biosynthetic arginine decarboxylase.